The sequence spans 461 residues: Porin AaxA (461 aa).

An N-terminal signal peptide occupies residues 1 to 22 (MSFRSVLLTALLSLSFTTTMQA).

This sequence belongs to the OprB family.

The protein resides in the cell outer membrane. Its function is as follows. Facilitates L-arginine uptake, as part of the AaxABC system. The arginine uptake by the bacterium in the macrophage may be a virulence factor against the host innate immune response. The polypeptide is Porin AaxA (aaxA) (Chlamydia trachomatis serovar D (strain ATCC VR-885 / DSM 19411 / UW-3/Cx)).